A 194-amino-acid chain; its full sequence is Imidazoleglycerol-phosphate dehydratase (194 aa).

Belongs to the imidazoleglycerol-phosphate dehydratase family.

It is found in the cytoplasm. The enzyme catalyses D-erythro-1-(imidazol-4-yl)glycerol 3-phosphate = 3-(imidazol-4-yl)-2-oxopropyl phosphate + H2O. The protein operates within amino-acid biosynthesis; L-histidine biosynthesis; L-histidine from 5-phospho-alpha-D-ribose 1-diphosphate: step 6/9. The sequence is that of Imidazoleglycerol-phosphate dehydratase from Chlorobaculum parvum (strain DSM 263 / NCIMB 8327) (Chlorobium vibrioforme subsp. thiosulfatophilum).